The sequence spans 1439 residues: Probable histone acetyltransferase HAC-like 2 (1439 aa).

2 disordered regions span residues 1-43 and 313-335; these read MKQG…ASAD and YGIS…TPTP. Polar residues predominate over residues 325-335; it reads VNPSTRSTPTP. The TAZ-type zinc finger occupies 607–687; it reads ENTKQYHAQA…NEHCHVCCKA (81 aa). The PHD-type; degenerate zinc-finger motif lies at 827–933; the sequence is KIHCHVQQET…EYTCFKCYIE (107 aa). Residues 948 to 1383 enclose the CBP/p300-type HAT domain; sequence VRGAKDLPRT…MLYHLHNPTG (436 aa). A coiled-coil region spans residues 964-989; it reads EERLFKRLREERQERANKLKTSLDEV. Residues 1071–1073, 1090–1091, and Trp-1146 each bind acetyl-CoA; these read LDS and RT. Residues 1265–1328 form a ZZ-type zinc finger; the sequence is HLQYSCSHCC…ILHPVEIVGV (64 aa). Residues Cys-1270, Cys-1273, Cys-1285, Cys-1288, Cys-1294, Cys-1297, His-1310, and His-1318 each coordinate Zn(2+).

The protein localises to the nucleus. It carries out the reaction L-lysyl-[protein] + acetyl-CoA = N(6)-acetyl-L-lysyl-[protein] + CoA + H(+). Its function is as follows. Acetyltransferase enzyme. Acetylates histones, giving a specific tag for transcriptional activation. The protein is Probable histone acetyltransferase HAC-like 2 of Oryza sativa subsp. japonica (Rice).